The following is a 103-amino-acid chain: Large ribosomal subunit protein bL21 (103 aa).

Belongs to the bacterial ribosomal protein bL21 family. In terms of assembly, part of the 50S ribosomal subunit. Contacts protein L20.

In terms of biological role, this protein binds to 23S rRNA in the presence of protein L20. The chain is Large ribosomal subunit protein bL21 from Treponema denticola (strain ATCC 35405 / DSM 14222 / CIP 103919 / JCM 8153 / KCTC 15104).